A 379-amino-acid chain; its full sequence is Homoserine O-succinyltransferase (379 aa).

The AB hydrolase-1 domain occupies 51-360; sequence NAVLICHALS…DAPQGHDAFL (310 aa). The active-site Nucleophile is the Ser157. Arg227 contributes to the substrate binding site. Residues Asp323 and His356 contribute to the active site. Position 357 (Asp357) interacts with substrate.

It belongs to the AB hydrolase superfamily. MetX family. Homodimer.

The protein resides in the cytoplasm. The catalysed reaction is L-homoserine + succinyl-CoA = O-succinyl-L-homoserine + CoA. It participates in amino-acid biosynthesis; L-methionine biosynthesis via de novo pathway; O-succinyl-L-homoserine from L-homoserine: step 1/1. In terms of biological role, transfers a succinyl group from succinyl-CoA to L-homoserine, forming succinyl-L-homoserine. The polypeptide is Homoserine O-succinyltransferase (Pseudomonas aeruginosa (strain LESB58)).